The primary structure comprises 105 residues: Ketoisovalerate oxidoreductase subunit VorD (105 aa).

2 4Fe-4S ferredoxin-type domains span residues 44–73 (FKPV…IKPD) and 74–103 (GYVA…MIKE). [4Fe-4S] cluster is bound by residues cysteine 53, cysteine 56, cysteine 59, cysteine 63, cysteine 83, cysteine 86, cysteine 89, and cysteine 93.

As to quaternary structure, heterotetramer of one alpha, one beta, one delta and one gamma chain. It depends on [4Fe-4S] cluster as a cofactor.

The enzyme catalyses 3-methyl-2-oxobutanoate + 2 oxidized [2Fe-2S]-[ferredoxin] + CoA = 2-methylpropanoyl-CoA + 2 reduced [2Fe-2S]-[ferredoxin] + CO2 + H(+). This Pyrococcus furiosus (strain ATCC 43587 / DSM 3638 / JCM 8422 / Vc1) protein is Ketoisovalerate oxidoreductase subunit VorD (vorD).